Here is a 413-residue protein sequence, read N- to C-terminus: Transforming growth factor beta-2 proprotein (413 aa).

The N-terminal stretch at 1 to 19 is a signal peptide; sequence MHYYVLFTFLTLDLAPVAL. Asn72, Asn140, and Asn241 each carry an N-linked (GlcNAc...) asparagine glycan. Cystine bridges form between Cys308–Cys317, Cys316–Cys379, Cys345–Cys410, and Cys349–Cys412.

Belongs to the TGF-beta family. In terms of assembly, interacts with Transforming growth factor beta-2 (TGF-beta-2) chain; interaction is non-covalent and maintains (TGF-beta-2) in a latent state. As to quaternary structure, homodimer; disulfide-linked. Interacts with TGF-beta receptors (tgfbr1 and tgfbr2), leading to signal transduction. Post-translationally, the precursor proprotein is cleaved in the Golgi apparatus to form Transforming growth factor beta-2 (TGF-beta-2) and Latency-associated peptide (LAP) chains, which remain non-covalently linked, rendering TGF-beta-2 inactive.

It localises to the secreted. It is found in the extracellular space. Its subcellular location is the extracellular matrix. Its function is as follows. Precursor of the Latency-associated peptide (LAP) and Transforming growth factor beta-2 (TGF-beta-2) chains, which constitute the regulatory and active subunit of TGF-beta-2, respectively. Required to maintain the Transforming growth factor beta-2 (TGF-beta-2) chain in a latent state during storage in extracellular matrix. Associates non-covalently with TGF-beta-2 and regulates its activation via interaction with 'milieu molecules', such as ltbp1 and lrrc32/garp, that control activation of TGF-beta-2. In terms of biological role, multifunctional protein that regulates various processes such as angiogenesis and heart development. Activation into mature form follows different steps: following cleavage of the proprotein in the Golgi apparatus, Latency-associated peptide (LAP) and Transforming growth factor beta-2 (TGF-beta-2) chains remain non-covalently linked rendering TGF-beta-2 inactive during storage in extracellular matrix. At the same time, LAP chain interacts with 'milieu molecules', such as ltbp1 and lrrc32/garp, that control activation of TGF-beta-2 and maintain it in a latent state during storage in extracellular milieus. Once activated following release of LAP, TGF-beta-2 acts by binding to TGF-beta receptors (tgfbr1 and tgfbr2), which transduce signal. In Xenopus laevis (African clawed frog), this protein is Transforming growth factor beta-2 proprotein (tgfb2).